Reading from the N-terminus, the 90-residue chain is DNA-binding protein HTa (90 aa).

The protein belongs to the bacterial histone-like protein family. Homotetramer.

Its function is as follows. Histone-like DNA-binding protein which is capable of wrapping DNA to stabilize it, and thus to prevent its denaturation under extreme environmental conditions. The sequence is that of DNA-binding protein HTa from Thermoplasma acidophilum (strain ATCC 25905 / DSM 1728 / JCM 9062 / NBRC 15155 / AMRC-C165).